The sequence spans 65 residues: Alpha-toxin Bot1 (65 aa).

The LCN-type CS-alpha/beta domain occupies 2–64 (RDAYIAQPEN…VPIRIPGKCH (63 aa)). Cystine bridges form between Cys-12–Cys-63, Cys-16–Cys-36, Cys-22–Cys-46, and Cys-26–Cys-48. Phe-65 is modified (phenylalanine amide).

It belongs to the long (4 C-C) scorpion toxin superfamily. Sodium channel inhibitor family. Alpha subfamily. In terms of tissue distribution, expressed by the venom gland.

The protein resides in the secreted. Alpha toxins bind voltage-independently at site-3 of sodium channels (Nav) and inhibit the inactivation of the activated channels, thereby blocking neuronal transmission. The polypeptide is Alpha-toxin Bot1 (Buthus occitanus tunetanus (Common European scorpion)).